The sequence spans 410 residues: Cysteine desulfurase IscS (410 aa).

Pyridoxal 5'-phosphate-binding positions include 80 to 81 (AT), asparagine 160, glutamine 188, and 208 to 210 (SGH). Residue lysine 211 is modified to N6-(pyridoxal phosphate)lysine. Threonine 248 contributes to the pyridoxal 5'-phosphate binding site. Cysteine 334 acts as the Cysteine persulfide intermediate in catalysis. Cysteine 334 contacts [2Fe-2S] cluster.

The protein belongs to the class-V pyridoxal-phosphate-dependent aminotransferase family. NifS/IscS subfamily. In terms of assembly, homodimer. Forms a heterotetramer with IscU, interacts with other sulfur acceptors. Requires pyridoxal 5'-phosphate as cofactor.

It localises to the cytoplasm. It carries out the reaction (sulfur carrier)-H + L-cysteine = (sulfur carrier)-SH + L-alanine. It participates in cofactor biosynthesis; iron-sulfur cluster biosynthesis. Its function is as follows. Master enzyme that delivers sulfur to a number of partners involved in Fe-S cluster assembly, tRNA modification or cofactor biosynthesis. Catalyzes the removal of elemental sulfur atoms from cysteine to produce alanine. Functions as a sulfur delivery protein for Fe-S cluster synthesis onto IscU, an Fe-S scaffold assembly protein, as well as other S acceptor proteins. The chain is Cysteine desulfurase IscS from Rickettsia bellii (strain OSU 85-389).